The primary structure comprises 172 residues: Trypsin inhibitor DE-3 (172 aa).

2 cysteine pairs are disulfide-bonded: C39/C83 and C132/C139.

Belongs to the protease inhibitor I3 (leguminous Kunitz-type inhibitor) family.

Functionally, inhibition of trypsin. This is Trypsin inhibitor DE-3 from Erythrina caffra (Kaffir tree).